The sequence spans 367 residues: 3-dehydroquinate synthase (367 aa).

Residues 72-77 (DGENYK), 106-110 (GVIGD), 130-131 (TT), Lys-143, Lys-152, and 170-173 (FLST) contribute to the NAD(+) site. Residues Glu-185, His-248, and His-265 each contribute to the Zn(2+) site.

The protein belongs to the sugar phosphate cyclases superfamily. Dehydroquinate synthase family. Co(2+) serves as cofactor. The cofactor is Zn(2+). Requires NAD(+) as cofactor.

It is found in the cytoplasm. It carries out the reaction 7-phospho-2-dehydro-3-deoxy-D-arabino-heptonate = 3-dehydroquinate + phosphate. It participates in metabolic intermediate biosynthesis; chorismate biosynthesis; chorismate from D-erythrose 4-phosphate and phosphoenolpyruvate: step 2/7. Catalyzes the conversion of 3-deoxy-D-arabino-heptulosonate 7-phosphate (DAHP) to dehydroquinate (DHQ). This is 3-dehydroquinate synthase from Buchnera aphidicola subsp. Cinara cedri (strain Cc).